A 261-amino-acid chain; its full sequence is Cell division protein DivIB (261 aa).

Over 1 to 27 (MEKGKVVVLEDRVPKLKERRRQKANRR) the chain is Cytoplasmic. The chain crosses the membrane as a helical span at residues 28–48 (LIAYLSFFFLFILCVLYFQSP). The segment at 47–117 (SPLGAVGHVE…PNTIAIHVRE (71 aa)) is alpha. The Extracellular portion of the chain corresponds to 49 to 261 (LGAVGHVEVS…KEDGDETTSP (213 aa)). The POTRA domain occupies 50–118 (GAVGHVEVSG…NTIAIHVREW (69 aa)). The interval 118-230 (WRRIAYVYDR…YPAIAAALDR (113 aa)) is beta. The tract at residues 231 to 260 (NVKGVIHLEVGSYFVPYSPPKKEDGDETTS) is gamma.

Belongs to the FtsQ/DivIB family. DivIB subfamily.

Its subcellular location is the cell membrane. In terms of biological role, cell division protein that may be involved in stabilizing or promoting the assembly of the division complex. The sequence is that of Cell division protein DivIB from Geobacillus kaustophilus (strain HTA426).